The following is a 293-amino-acid chain: Acetyl-coenzyme A carboxylase carboxyl transferase subunit beta (293 aa).

The 265-residue stretch at 29-293 folds into the CoA carboxyltransferase N-terminal domain; it reads LWVKCPECGQ…GCKAKKAAGK (265 aa). The Zn(2+) site is built by Cys33, Cys36, Cys52, and Cys55. The C4-type zinc finger occupies 33 to 55; it reads CPECGQVVYRKDLHANASVCSNC.

The protein belongs to the AccD/PCCB family. Acetyl-CoA carboxylase is a heterohexamer composed of biotin carboxyl carrier protein (AccB), biotin carboxylase (AccC) and two subunits each of ACCase subunit alpha (AccA) and ACCase subunit beta (AccD). It depends on Zn(2+) as a cofactor.

The protein localises to the cytoplasm. It carries out the reaction N(6)-carboxybiotinyl-L-lysyl-[protein] + acetyl-CoA = N(6)-biotinyl-L-lysyl-[protein] + malonyl-CoA. Its pathway is lipid metabolism; malonyl-CoA biosynthesis; malonyl-CoA from acetyl-CoA: step 1/1. Component of the acetyl coenzyme A carboxylase (ACC) complex. Biotin carboxylase (BC) catalyzes the carboxylation of biotin on its carrier protein (BCCP) and then the CO(2) group is transferred by the transcarboxylase to acetyl-CoA to form malonyl-CoA. In Prochlorococcus marinus (strain MIT 9303), this protein is Acetyl-coenzyme A carboxylase carboxyl transferase subunit beta.